Reading from the N-terminus, the 411-residue chain is Glutamate dehydrogenase 2, mitochondrial (411 aa).

The N-terminal 18 residues, 1 to 18, are a transit peptide targeting the mitochondrion; the sequence is MNALAATSRNFRQAARLL. Residue K102 is part of the active site.

It belongs to the Glu/Leu/Phe/Val dehydrogenases family. As to expression, expressed in roots. Expressed ubiquitously in various tissues.

The protein localises to the mitochondrion. It carries out the reaction L-glutamate + NAD(+) + H2O = 2-oxoglutarate + NH4(+) + NADH + H(+). It catalyses the reaction L-glutamate + NADP(+) + H2O = 2-oxoglutarate + NH4(+) + NADPH + H(+). In Oryza sativa subsp. japonica (Rice), this protein is Glutamate dehydrogenase 2, mitochondrial (GDH2).